We begin with the raw amino-acid sequence, 481 residues long: MIIDSKGRRIIPPSARRFMIVTAIAVAIFVVITGVVIFVTRPPTSDSAATFHRGDWQAPPEALLSSPMRVRPVPGWRVRMTDLGLPESAVFADTELTHEAEPFVGAMEKRAYFMAMSTTDPRRWLVGLDLSTGRPLFSPVSIDPGPDFVKCFVNGPDQVLCAADGKPEGKTATIAWVVDTRTGEVVFNGPTDLHVTPGSGSHLKQVGSYVVAEIQGKGLSGVGPRAETTWLIPDAKKVTPTNRNADTAAPRLAVAEDLAGGPDHAVVFSVVDGTVITPDLGADRTPERAVVYPQGFAILAAGKRGSGLRDTVLFFDNAGNRVGESGIQGSLSDLSMVLPMVQSAPSYTVFGANGAGLIQLPGEGLDAVLIGHRLYAPESEWDGPVKVRRWRQFDLRTGEEGTACLPNMQWYIANDGQVGVFETSQHETTGATFFGMDLTTCEKLWTVPVNWESFHRLWRIDDTLVELSDDGKELHSLVAPA.

A helical transmembrane segment spans residues F18–F38.

It is found in the cell inner membrane. Functionally, involved in DNA conjugation in the recipient strain. This is an uncharacterized protein from Mycolicibacterium smegmatis (strain MKD8) (Mycobacterium smegmatis).